The sequence spans 549 residues: Glucose-6-phosphate isomerase (549 aa).

3 positions are modified to N6-acetyllysine: K80, K228, and K234. E355 (proton donor) is an active-site residue. Residues H386 and K514 contribute to the active site.

This sequence belongs to the GPI family.

Its subcellular location is the cytoplasm. The catalysed reaction is alpha-D-glucose 6-phosphate = beta-D-fructose 6-phosphate. Its pathway is carbohydrate biosynthesis; gluconeogenesis. It participates in carbohydrate degradation; glycolysis; D-glyceraldehyde 3-phosphate and glycerone phosphate from D-glucose: step 2/4. Its function is as follows. Catalyzes the reversible isomerization of glucose-6-phosphate to fructose-6-phosphate. The chain is Glucose-6-phosphate isomerase from Shigella flexneri.